Here is a 255-residue protein sequence, read N- to C-terminus: uncharacterized protein (255 aa).

A signal peptide spans 1–23 (MKRLNKLVLGIIFLFLVISITAG). The N-palmitoyl cysteine moiety is linked to residue cysteine 24. Residue cysteine 24 is the site of S-diacylglycerol cysteine attachment.

It belongs to the staphylococcal tandem lipoprotein family.

Its subcellular location is the cell membrane. This is an uncharacterized protein from Staphylococcus aureus (strain USA300).